A 251-amino-acid chain; its full sequence is uncharacterized protein (251 aa).

The N-acetyltransferase domain maps to 4-152; sequence IEITKDNIED…YFQLMALTWN (149 aa).

It belongs to the acetyltransferase family.

This is an uncharacterized protein from Bacillus subtilis (strain 168).